Reading from the N-terminus, the 388-residue chain is Galactokinase (388 aa).

Substrate is bound at residue 33-36; the sequence is EHTD. Residues Ser67 and 124 to 130 contribute to the ATP site; that span reads GAGLSSS. Mg(2+)-binding residues include Ser130 and Glu162. Catalysis depends on Asp174, which acts as the Proton acceptor. Tyr224 serves as a coordination point for substrate.

Belongs to the GHMP kinase family. GalK subfamily.

It localises to the cytoplasm. The enzyme catalyses alpha-D-galactose + ATP = alpha-D-galactose 1-phosphate + ADP + H(+). It participates in carbohydrate metabolism; galactose metabolism. Catalyzes the transfer of the gamma-phosphate of ATP to D-galactose to form alpha-D-galactose-1-phosphate (Gal-1-P). This Lacticaseibacillus casei (strain BL23) (Lactobacillus casei) protein is Galactokinase.